The following is a 619-amino-acid chain: Low-temperature-induced 65 kDa protein (619 aa).

Disordered regions lie at residues 1 to 383 and 408 to 429; these read MESQ…STYT and LGYT…ETPR. Positions 9–33 are enriched in basic and acidic residues; it reads YGHEQAEEPIRIHHPEEEEHHEKGA. Residues 36-48 are compositionally biased toward basic residues; that stretch reads VLKKVKEKAKKIK. Over residues 62 to 73 the composition is skewed to acidic residues; the sequence is VEDDDDEYDEQD. Positions 175 to 186 are enriched in basic and acidic residues; sequence FSDRGESREAHQ. Positions 188–197 are enriched in polar residues; the sequence is PLNTPVSLLS. Over residues 221 to 231 the composition is skewed to basic and acidic residues; sequence VNVETPKRLEE. The span at 245–254 shows a compositional bias: polar residues; the sequence is GVSNYQSKVT. Composition is skewed to basic and acidic residues over residues 276-309 and 323-337; these read KVTD…ESDI and AGME…DVKV. A run of 5 repeats spans residues 404–408, 442–446, 460–464, 490–494, and 507–511. The interval 404–511 is 5 X 5 AA repeats of [IV]-[AMS]-[EST]-K-L; that stretch reads VASKLGYTGE…ALSEMIAEKL (108 aa). A disordered region spans residues 461–485; the sequence is MTKLPLSGGGSGVKETQQGEEKGVT. S536 carries the phosphoserine modification. Residues 537–555 show a composition bias toward basic and acidic residues; it reads DQIAEGKGHGEAVAEEGKG. The tract at residues 537–619 is disordered; the sequence is DQIAEGKGHG…GGKGVQDSGN (83 aa). The segment covering 583–593 has biased composition (polar residues); sequence ESPQSLGTTVG. A compositionally biased stretch (gly residues) spans 603–613; it reads SELGGSGGGKG.

Belongs to the LTI78/LTI65 family.

The polypeptide is Low-temperature-induced 65 kDa protein (LTI65) (Arabidopsis thaliana (Mouse-ear cress)).